The primary structure comprises 365 residues: UDP-N-acetylglucosamine--N-acetylmuramyl-(pentapeptide) pyrophosphoryl-undecaprenol N-acetylglucosamine transferase (365 aa).

UDP-N-acetyl-alpha-D-glucosamine-binding positions include 12 to 14, N128, R169, S195, and Q296; that span reads TGG.

Belongs to the glycosyltransferase 28 family. MurG subfamily.

The protein localises to the cell inner membrane. The enzyme catalyses di-trans,octa-cis-undecaprenyl diphospho-N-acetyl-alpha-D-muramoyl-L-alanyl-D-glutamyl-meso-2,6-diaminopimeloyl-D-alanyl-D-alanine + UDP-N-acetyl-alpha-D-glucosamine = di-trans,octa-cis-undecaprenyl diphospho-[N-acetyl-alpha-D-glucosaminyl-(1-&gt;4)]-N-acetyl-alpha-D-muramoyl-L-alanyl-D-glutamyl-meso-2,6-diaminopimeloyl-D-alanyl-D-alanine + UDP + H(+). It participates in cell wall biogenesis; peptidoglycan biosynthesis. Cell wall formation. Catalyzes the transfer of a GlcNAc subunit on undecaprenyl-pyrophosphoryl-MurNAc-pentapeptide (lipid intermediate I) to form undecaprenyl-pyrophosphoryl-MurNAc-(pentapeptide)GlcNAc (lipid intermediate II). This Gluconobacter oxydans (strain 621H) (Gluconobacter suboxydans) protein is UDP-N-acetylglucosamine--N-acetylmuramyl-(pentapeptide) pyrophosphoryl-undecaprenol N-acetylglucosamine transferase.